Reading from the N-terminus, the 82-residue chain is Small ribosomal subunit protein uS17 (82 aa).

It belongs to the universal ribosomal protein uS17 family. In terms of assembly, part of the 30S ribosomal subunit.

In terms of biological role, one of the primary rRNA binding proteins, it binds specifically to the 5'-end of 16S ribosomal RNA. The polypeptide is Small ribosomal subunit protein uS17 (Synechococcus elongatus (strain ATCC 33912 / PCC 7942 / FACHB-805) (Anacystis nidulans R2)).